We begin with the raw amino-acid sequence, 699 residues long: Ubiquitin-like modifier-activating enzyme ATG7 (699 aa).

Residues 370–375 carry the GXGXXG motif motif; it reads GAGTLG. Cysteine 550 (glycyl thioester intermediate) is an active-site residue. The tract at residues 653 to 691 is homodimerization; it reads ALASRDYVAELSGLAEVQRLAEKAAAEMQWSEDEEGMGE.

The protein belongs to the ATG7 family. Homodimer. Interacts with ATG8 through a thioester bond between Cys-550 and the C-terminal Gly of ATG8 and with ATG12 through a thioester bond between Cys-550 and the C-terminal Gly of ATG12. Also interacts with ATG3.

Its subcellular location is the cytoplasm. The protein resides in the preautophagosomal structure. Its function is as follows. E1-like activating enzyme involved in the 2 ubiquitin-like systems required for cytoplasm to vacuole transport (Cvt) and autophagy. Activates ATG12 for its conjugation with ATG5 and ATG8 for its conjugation with phosphatidylethanolamine. Both systems are needed for the ATG8 association to Cvt vesicles and autophagosomes membranes. Autophagy is essential for maintenance of amino acid levels and protein synthesis under nitrogen starvation. Required for selective autophagic degradation of the nucleus (nucleophagy) as well as for mitophagy which contributes to regulate mitochondrial quantity and quality by eliminating the mitochondria to a basal level to fulfill cellular energy requirements and preventing excess ROS production. Required for normal mycelial growth and conidiogenesis. This Sordaria macrospora (strain ATCC MYA-333 / DSM 997 / K(L3346) / K-hell) protein is Ubiquitin-like modifier-activating enzyme ATG7.